The primary structure comprises 455 residues: Kynurenine 3-monooxygenase (455 aa).

It belongs to the aromatic-ring hydroxylase family. KMO subfamily. FAD is required as a cofactor.

It carries out the reaction L-kynurenine + NADPH + O2 + H(+) = 3-hydroxy-L-kynurenine + NADP(+) + H2O. It participates in cofactor biosynthesis; NAD(+) biosynthesis; quinolinate from L-kynurenine: step 1/3. Its function is as follows. Catalyzes the hydroxylation of L-kynurenine (L-Kyn) to form 3-hydroxy-L-kynurenine (L-3OHKyn). Required for synthesis of quinolinic acid. This is Kynurenine 3-monooxygenase from Xanthomonas oryzae pv. oryzae (strain PXO99A).